The following is a 99-amino-acid chain: Acylphosphatase (99 aa).

An Acylphosphatase-like domain is found at Ile5 to Pro97. Catalysis depends on residues Arg20 and Asn38.

It belongs to the acylphosphatase family.

It carries out the reaction an acyl phosphate + H2O = a carboxylate + phosphate + H(+). The protein is Acylphosphatase (acyP) of Bradyrhizobium diazoefficiens (strain JCM 10833 / BCRC 13528 / IAM 13628 / NBRC 14792 / USDA 110).